Here is a 198-residue protein sequence, read N- to C-terminus: Ribonuclease HII (198 aa).

One can recognise an RNase H type-2 domain in the interval 10–198 (QLVAGVDEVG…PVKRALGLAS (189 aa)). A divalent metal cation is bound by residues D16, E17, and D108.

Belongs to the RNase HII family. The cofactor is Mn(2+). It depends on Mg(2+) as a cofactor.

It localises to the cytoplasm. It catalyses the reaction Endonucleolytic cleavage to 5'-phosphomonoester.. In terms of biological role, endonuclease that specifically degrades the RNA of RNA-DNA hybrids. The polypeptide is Ribonuclease HII (Shigella boydii serotype 4 (strain Sb227)).